The chain runs to 98 residues: UPF0235 protein CCNA_03737 (98 aa).

It belongs to the UPF0235 family.

The protein is UPF0235 protein CCNA_03737 of Caulobacter vibrioides (strain NA1000 / CB15N) (Caulobacter crescentus).